The following is a 252-amino-acid chain: 3-dehydroquinate dehydratase (252 aa).

3-dehydroquinate-binding positions include Ser21, 46 to 48 (EWR), and Arg82. His143 functions as the Proton donor/acceptor in the catalytic mechanism. Lys170 (schiff-base intermediate with substrate) is an active-site residue. 3-dehydroquinate-binding residues include Arg213, Ser232, and Gln236.

Belongs to the type-I 3-dehydroquinase family. In terms of assembly, homodimer.

The enzyme catalyses 3-dehydroquinate = 3-dehydroshikimate + H2O. It functions in the pathway metabolic intermediate biosynthesis; chorismate biosynthesis; chorismate from D-erythrose 4-phosphate and phosphoenolpyruvate: step 3/7. Its function is as follows. Involved in the third step of the chorismate pathway, which leads to the biosynthesis of aromatic amino acids. Catalyzes the cis-dehydration of 3-dehydroquinate (DHQ) and introduces the first double bond of the aromatic ring to yield 3-dehydroshikimate. The protein is 3-dehydroquinate dehydratase of Shigella boydii serotype 4 (strain Sb227).